We begin with the raw amino-acid sequence, 609 residues long: Pair-rule protein odd-paired (609 aa).

Positions 20–41 (RMSPNTTASNSNAQQQQQQQLE) are disordered. A compositionally biased stretch (polar residues) spans 22–32 (SPNTTASNSNA). The segment at 210 to 249 (MQCLWIDPDQPGLVPPGGRKTCNKVFHSMHEIVTHLTVEH) adopts a C2H2-type 1; atypical zinc-finger fold. C2H2-type zinc fingers lie at residues 258–285 (HACFWVGCSRNGRPFKAKYKLVNHIRVH), 291–315 (FACPHPGCGKVFARSENLKIHKRTH), 321–345 (FKCEHEGCDRRFANSSDRKKHSHVH), and 351–375 (YNCRINGCDKSYTHPSSLRKHMKVH). Disordered regions lie at residues 373-550 (KVHG…ASAS) and 583-609 (EAMNPLNHFGHHHHHHHLMHPGAATAY). Residues 399-409 (IITGGAQTPPS) are compositionally biased toward polar residues. Low complexity-rich tracts occupy residues 414–434 (GSAGSSSGVSSLSGGSGIKSS) and 449–498 (HLGA…LTAH). Basic residues predominate over residues 528–537 (SHHHHPHHHQ). Positions 538 to 550 (AAPSPGAAAASAS) are enriched in low complexity. Positions 591 to 601 (FGHHHHHHHLM) are enriched in basic residues.

Belongs to the GLI C2H2-type zinc-finger protein family. As to expression, expressed throughout all segment primordia; expressed ubiquitously in the ectoderm and mesoderm precursors.

The protein resides in the nucleus. In terms of biological role, transcription factor essential for parasegmental subdivision of the embryo. It is involved in the activation of wingless (wg) in odd parasegments. It is also required for the timely activation of wg in the remaining parasegments and for the timely activation of engrailed (en) in all parasegments. The sequence is that of Pair-rule protein odd-paired (opa) from Drosophila melanogaster (Fruit fly).